The primary structure comprises 419 residues: UDP-N-acetylglucosamine 1-carboxyvinyltransferase 2 (419 aa).

22-23 (KN) contributes to the phosphoenolpyruvate binding site. A UDP-N-acetyl-alpha-D-glucosamine-binding site is contributed by R92. D116 acts as the Proton donor in catalysis. Residues 121–125 (RPIDQ), D306, and L328 each bind UDP-N-acetyl-alpha-D-glucosamine.

This sequence belongs to the EPSP synthase family. MurA subfamily.

It localises to the cytoplasm. It carries out the reaction phosphoenolpyruvate + UDP-N-acetyl-alpha-D-glucosamine = UDP-N-acetyl-3-O-(1-carboxyvinyl)-alpha-D-glucosamine + phosphate. The protein operates within cell wall biogenesis; peptidoglycan biosynthesis. Its function is as follows. Cell wall formation. Adds enolpyruvyl to UDP-N-acetylglucosamine. This is UDP-N-acetylglucosamine 1-carboxyvinyltransferase 2 from Latilactobacillus sakei subsp. sakei (strain 23K) (Lactobacillus sakei subsp. sakei).